The chain runs to 359 residues: 3-dehydroquinate synthase (359 aa).

Residues 71–76 (DGEAYK), 105–109 (GVVGD), 129–130 (TT), K142, and K151 contribute to the NAD(+) site. E184, H247, and H264 together coordinate Zn(2+).

Belongs to the sugar phosphate cyclases superfamily. Dehydroquinate synthase family. The cofactor is Co(2+). Requires Zn(2+) as cofactor. NAD(+) serves as cofactor.

It is found in the cytoplasm. It catalyses the reaction 7-phospho-2-dehydro-3-deoxy-D-arabino-heptonate = 3-dehydroquinate + phosphate. It functions in the pathway metabolic intermediate biosynthesis; chorismate biosynthesis; chorismate from D-erythrose 4-phosphate and phosphoenolpyruvate: step 2/7. Catalyzes the conversion of 3-deoxy-D-arabino-heptulosonate 7-phosphate (DAHP) to dehydroquinate (DHQ). This Burkholderia lata (strain ATCC 17760 / DSM 23089 / LMG 22485 / NCIMB 9086 / R18194 / 383) protein is 3-dehydroquinate synthase.